Here is a 572-residue protein sequence, read N- to C-terminus: Isocitrate lyase (572 aa).

104–106 is a substrate binding site; the sequence is SGW. Residue D175 participates in Mg(2+) binding. Catalysis depends on C213, which acts as the Proton acceptor. Substrate is bound by residues 214-215, R250, 437-441, and T472; these read GH and NLSPS. The interval 550–572 is disordered; it reads QFKGSWTGPGSESSSHVLAKSRM. Residues 570–572 carry the Microbody targeting signal motif; that stretch reads SRM.

It belongs to the isocitrate lyase/PEP mutase superfamily. Isocitrate lyase family. Requires Mg(2+) as cofactor. Expressed in leaves.

The protein localises to the glyoxysome. It catalyses the reaction D-threo-isocitrate = glyoxylate + succinate. The protein operates within carbohydrate metabolism; glyoxylate cycle; (S)-malate from isocitrate: step 1/2. In terms of biological role, involved in storage lipid mobilization during the growth of higher plant seedling. The polypeptide is Isocitrate lyase (Oryza sativa subsp. japonica (Rice)).